A 133-amino-acid polypeptide reads, in one-letter code: Small ribosomal subunit protein uS8 (133 aa).

The protein belongs to the universal ribosomal protein uS8 family. In terms of assembly, part of the 30S ribosomal subunit. Contacts proteins S5 and S12.

Functionally, one of the primary rRNA binding proteins, it binds directly to 16S rRNA central domain where it helps coordinate assembly of the platform of the 30S subunit. The chain is Small ribosomal subunit protein uS8 from Anaplasma phagocytophilum (strain HZ).